Here is a 550-residue protein sequence, read N- to C-terminus: Arginine--tRNA ligase (550 aa).

The 'HIGH' region signature appears at 130–140 (ANPTGPIHLGG).

The protein belongs to the class-I aminoacyl-tRNA synthetase family. In terms of assembly, monomer.

Its subcellular location is the cytoplasm. The catalysed reaction is tRNA(Arg) + L-arginine + ATP = L-arginyl-tRNA(Arg) + AMP + diphosphate. The protein is Arginine--tRNA ligase of Corynebacterium diphtheriae (strain ATCC 700971 / NCTC 13129 / Biotype gravis).